The primary structure comprises 238 residues: 2-C-methyl-D-erythritol 4-phosphate cytidylyltransferase (238 aa).

The protein belongs to the IspD/TarI cytidylyltransferase family. IspD subfamily.

It carries out the reaction 2-C-methyl-D-erythritol 4-phosphate + CTP + H(+) = 4-CDP-2-C-methyl-D-erythritol + diphosphate. It functions in the pathway isoprenoid biosynthesis; isopentenyl diphosphate biosynthesis via DXP pathway; isopentenyl diphosphate from 1-deoxy-D-xylulose 5-phosphate: step 2/6. Catalyzes the formation of 4-diphosphocytidyl-2-C-methyl-D-erythritol from CTP and 2-C-methyl-D-erythritol 4-phosphate (MEP). This Acinetobacter baumannii (strain AYE) protein is 2-C-methyl-D-erythritol 4-phosphate cytidylyltransferase.